A 41-amino-acid chain; its full sequence is Large ribosomal subunit protein bL36 (41 aa).

It belongs to the bacterial ribosomal protein bL36 family.

The polypeptide is Large ribosomal subunit protein bL36 (Neisseria gonorrhoeae (strain ATCC 700825 / FA 1090)).